The primary structure comprises 1250 residues: DNA excision repair protein ERCC-6-like (1250 aa).

Residue S14 is modified to Phosphoserine. One copy of the TPR 1 repeat lies at 21–54; it reads YLRYVKEAKEATKNGDLEEAFKLFNLAKDIFPNE. The 169-residue stretch at 109–277 folds into the Helicase ATP-binding domain; it reads SLYRDGRKGG…WSLFDFACQG (169 aa). 122 to 129 is an ATP binding site; sequence DDMGLGKT. The short motif at 228–231 is the DEAH box element; it reads DEAH. The Helicase C-terminal domain occupies 464–620; the sequence is FLMDLLKRLR…EKKNPFRYFS (157 aa). The segment at 735–768 is disordered; that stretch reads VFPSSTKKKCPKLNKPQPQPSPLLSTHHTQEEDI. Phosphoserine occurs at positions 755, 774, 807, and 810. At T813 the chain carries Phosphothreonine. S820 bears the Phosphoserine mark. The interval 926-946 is disordered; it reads SALQDAQASEAKLEEEPSASS. Phosphoserine is present on residues S969, S971, S995, S1004, and S1028. Residues 1061–1092 are disordered; it reads ASTPKNDISPPGRFFSSQIPSSVNKSMNSRRS. Position 1063 is a phosphothreonine; by PLK1 (T1063). Residue S1069 is modified to Phosphoserine. Residues 1075–1087 show a composition bias toward polar residues; the sequence is FSSQIPSSVNKSM. 2 positions are modified to phosphoserine: S1098 and S1118. A disordered region spans residues 1110–1199; sequence MEERLDDSSE…QDKAAEATND (90 aa). The segment covering 1115 to 1124 has biased composition (basic and acidic residues); it reads DDSSEAKGPE. Residues 1125–1135 are compositionally biased toward acidic residues; the sequence is DYPEEGVEESS. Residues 1149–1173 are compositionally biased toward polar residues; the sequence is ETLSSENKSSWLMTSKPSALAQETS. 2 positions are modified to phosphoserine: S1181 and S1188. One copy of the TPR 2 repeat lies at 1200 to 1233; sequence YETLVKRGKELKECGKIQEALNCLVKALDIKSAD.

It belongs to the SNF2/RAD54 helicase family. Interacts with PLK1, which phosphorylates it. Both proteins are mutually dependent on each other for correct subcellular localization. Interacts (via N-terminal TPR repeat) with BEND3 (via BEN domains 1 and 3); the interaction is direct. Phosphorylation by PLK1 prevents the association with chromosome arms and restricts its localization to the kinetochore-centromere region.

It localises to the chromosome. The protein resides in the centromere. Its subcellular location is the kinetochore. It catalyses the reaction ATP + H2O = ADP + phosphate + H(+). DNA helicase that acts as a tension sensor that associates with catenated DNA which is stretched under tension until it is resolved during anaphase. Functions as ATP-dependent DNA translocase. Can promote Holliday junction branch migration (in vitro). The sequence is that of DNA excision repair protein ERCC-6-like (ERCC6L) from Homo sapiens (Human).